The primary structure comprises 203 residues: Glutathione S-transferase 2 (203 aa).

Positions 1 to 78 (MPKVVFHYFG…YLGRKYGLAG (78 aa)) constitute a GST N-terminal domain. Glutathione contacts are provided by residues Tyr-8, Trp-38, Lys-42, 48–50 (GQM), and 62–63 (QS). The GST C-terminal domain maps to 80 to 203 (DIEEDFEIDQ…YLDSAPKKEF (124 aa)).

This sequence belongs to the GST superfamily. Sigma family. In terms of assembly, homodimer.

It catalyses the reaction RX + glutathione = an S-substituted glutathione + a halide anion + H(+). Functionally, conjugation of reduced glutathione to a wide number of exogenous and endogenous hydrophobic electrophiles. This chain is Glutathione S-transferase 2 (GST2), found in Manduca sexta (Tobacco hawkmoth).